The primary structure comprises 491 residues: D-xylose-proton symporter (491 aa).

Residues 1–9 are Cytoplasmic-facing; that stretch reads MNTQYNSSY. A helical transmembrane segment spans residues 10 to 30; that stretch reads IFSITLVATLGGLLFGYDTAV. At 31 to 55 the chain is on the periplasmic side; it reads ISGTVESLNTVFVAPQNLSESAANS. The helical transmembrane segment at 56-76 threads the bilayer; the sequence is LLGFCVASALIGCIIGGALGG. Over 77–89 the chain is Cytoplasmic; it reads YCSNRFGRRDSLK. A helical transmembrane segment spans residues 90–110; that stretch reads IAAVLFFISGVGSAWPELGFT. Residues 111–133 are Periplasmic-facing; the sequence is SINPDNTVPVYLAGYVPEFVIYR. The helical transmembrane segment at 134-154 threads the bilayer; that stretch reads IIGGIGVGLASMLSPMYIAEL. At 155-165 the chain is on the cytoplasmic side; that stretch reads APAHIRGKLVS. Residues 166–186 form a helical membrane-spanning segment; that stretch reads FNQFAIIFGQLLVYCVNYFIA. Glutamine 168 is a binding site for beta-D-xylose. Residues 187–200 lie on the Periplasmic side of the membrane; that stretch reads RSGDASWLNTDGWR. The chain crosses the membrane as a helical span at residues 201 to 221; that stretch reads YMFASECIPALLFLMLLYTVP. The Cytoplasmic segment spans residues 222–272; it reads ESPRWLMSRGKQEQAEGILRKIMGNTLATQAVQEIKHSLDHGRKTGGRLLM. A helical transmembrane segment spans residues 273–293; that stretch reads FGVGVIVIGVMLSIFQQFVGI. Beta-D-xylose is bound by residues 288-289 and asparagine 294; that span reads QQ. Residues 294 to 312 are Periplasmic-facing; that stretch reads NVVLYYAPEVFKTLGASTD. A helical transmembrane segment spans residues 313–333; the sequence is IALLQTIIVGVINLTFTVLAI. At 334–343 the chain is on the cytoplasmic side; that stretch reads MTVDKFGRKP. The helical transmembrane segment at 344 to 364 threads the bilayer; sequence LQIIGALGMAIGMFSLGTAFY. At 365–369 the chain is on the periplasmic side; the sequence is TQAPG. Residues 370–390 traverse the membrane as a helical segment; the sequence is IVALLSMLFYVAAFAMSWGPV. Over 391–407 the chain is Cytoplasmic; sequence CWVLLSEIFPNAIRGKA. Tryptophan 392 and glutamine 415 together coordinate beta-D-xylose. A helical transmembrane segment spans residues 408-428; it reads LAIAVAAQWLANYFVSWTFPM. Residues 429–442 are Periplasmic-facing; the sequence is MDKNSWLVAHFHNG. Residues 443–463 form a helical membrane-spanning segment; that stretch reads FSYWIYGCMGVLAALFMWKFV. Residues 464–491 lie on the Cytoplasmic side of the membrane; sequence PETKGKTLEELEALWEPETKKTQQTATL.

The protein belongs to the major facilitator superfamily. Sugar transporter (TC 2.A.1.1) family.

It localises to the cell inner membrane. The catalysed reaction is D-xylose(in) + H(+)(in) = D-xylose(out) + H(+)(out). Uptake of D-xylose across the boundary membrane with the concomitant transport of protons into the cell (symport system). The sequence is that of D-xylose-proton symporter (xylE) from Escherichia coli O157:H7.